The primary structure comprises 1081 residues: Protein QUIRKY (1081 aa).

One can recognise a C2 1 domain in the interval 1 to 124 (MNTTPFHSDP…SRRGEEGLVY (124 aa)). Disordered regions lie at residues 154–198 (DTAG…MNIP) and 238–323 (PQHV…MEKK). Over residues 163 to 176 (QQQQQQQQFHPPQQ) the composition is skewed to low complexity. The span at 248–257 (NHPHRNDNHP) shows a compositional bias: basic and acidic residues. Over residues 258–268 (QRPPSPPPPPS) the composition is skewed to pro residues. C2 domains are found at residues 318 to 440 (TTME…PQWY), 477 to 605 (SSDA…SKWH), and 652 to 778 (VCSD…TNSY). Residues glutamate 351, serine 352, aspartate 408, and serine 413 each coordinate Ca(2+). 3 consecutive transmembrane segments (helical) span residues 879 to 899 (WYRI…LDNI), 916 to 936 (LVLV…VVMI), and 1024 to 1044 (LFIA…AKMV).

It belongs to the MCTP family. In terms of assembly, interacts with SUB/SCM and POQ at the plasma membrane. Binds to SUB/SCM at plasmodesmata (PD) in root epidermal cells to promote tissue morphogenesis. Ca(2+) is required as a cofactor. As to expression, observed mainly in flowers, and, to a lower extent, in seedlings, roots, shoots, leaves, stems and inflorescences. Expressed in the vascular tissues of roots, cotyledons and rosette leaves. Accumulates in roots meristems.

It localises to the cell membrane. The protein resides in the cytoplasm. It is found in the golgi apparatus membrane. The protein localises to the cell junction. Its subcellular location is the plasmodesma. May be involved in Ca 2(+)-dependent signaling and membrane trafficking. Plays a role in fruit dehiscence. Components of the machinery involved in organ development mediated by the receptor-like kinase STRUBBELIG (SUB). Collaboratively with SUB and POQ, regulates cell growth anisotropy during gynoecium development, thus linking together cell-cell communication and cellular growth. Together with SUB/SCM, links RLK-dependent signal transduction and intercellular communication mediated by plasmodesmata (PD) to regulate tissue morphogenesis. May function as a signaling molecule by regulating the trafficking of other regulators. The polypeptide is Protein QUIRKY (Arabidopsis thaliana (Mouse-ear cress)).